The following is a 189-amino-acid chain: S-protein homolog 26 (189 aa).

The signal sequence occupies residues 1-25 (MISMNRLSILLFVFAFGLTMMSNTA).

The protein belongs to the plant self-incompatibility (S1) protein family.

It is found in the secreted. The chain is S-protein homolog 26 from Arabidopsis thaliana (Mouse-ear cress).